The primary structure comprises 910 residues: Protein translocase subunit SecA (910 aa).

ATP is bound by residues Gln86, 104 to 108, and Asp508; that span reads GEGKT. Zn(2+) contacts are provided by Cys894, Cys896, Cys905, and Cys906.

This sequence belongs to the SecA family. Monomer and homodimer. Part of the essential Sec protein translocation apparatus which comprises SecA, SecYEG and auxiliary proteins SecDF. Other proteins may also be involved. Zn(2+) is required as a cofactor.

It is found in the cell membrane. The protein localises to the cytoplasm. The catalysed reaction is ATP + H2O + cellular proteinSide 1 = ADP + phosphate + cellular proteinSide 2.. Its function is as follows. Part of the Sec protein translocase complex. Interacts with the SecYEG preprotein conducting channel. Has a central role in coupling the hydrolysis of ATP to the transfer of proteins into and across the cell membrane, serving as an ATP-driven molecular motor driving the stepwise translocation of polypeptide chains across the membrane. The protein is Protein translocase subunit SecA of Acetivibrio thermocellus (strain ATCC 27405 / DSM 1237 / JCM 9322 / NBRC 103400 / NCIMB 10682 / NRRL B-4536 / VPI 7372) (Clostridium thermocellum).